Reading from the N-terminus, the 62-residue chain is Small ribosomal subunit protein bS21C (62 aa).

The disordered stretch occupies residues 43–62 (EKSKRKKLALHKQSKRRFRT). A compositionally biased stretch (basic residues) spans 45 to 62 (SKRKKLALHKQSKRRFRT).

This sequence belongs to the bacterial ribosomal protein bS21 family.

The polypeptide is Small ribosomal subunit protein bS21C (Trichormus variabilis (strain ATCC 29413 / PCC 7937) (Anabaena variabilis)).